Here is a 155-residue protein sequence, read N- to C-terminus: Microsomal glutathione S-transferase 1 (155 aa).

Residues 3–9 are Lumenal-facing; sequence DLTQVMD. Residues 10-33 form a helical membrane-spanning segment; sequence DEVFMAFASYATIILSKMMLMSTA. The Cytoplasmic segment spans residues 34–62; the sequence is TAFYRLTRKVFANPEDCVAFGKGENAKKY. R38 is a binding site for glutathione. N6-acetyllysine occurs at positions 42, 55, and 60. The chain crosses the membrane as a helical span at residues 63–96; that stretch reads LRTDDRVERVRRAHLNDLENIIPFLGIGLLYSLS. The glutathione site is built by R73, R74, H76, and E81. Over 97 to 99 the chain is Lumenal; sequence GPD. Residues 100 to 123 form a helical membrane-spanning segment; sequence PSTAILHFRLFVGARIYHTIAYLT. Y121 is a binding site for glutathione. Residues 124-128 lie on the Cytoplasmic side of the membrane; that stretch reads PLPQP. Residues 129 to 148 traverse the membrane as a helical segment; the sequence is NRALSFFVGYGVTLSMAYRL. Residues 149–155 are Lumenal-facing; the sequence is LKSKLYL.

The protein belongs to the MAPEG family. Homotrimer; The trimer binds only one molecule of glutathione. Highly expressed in liver.

It localises to the endoplasmic reticulum membrane. The protein resides in the mitochondrion outer membrane. It catalyses the reaction RX + glutathione = an S-substituted glutathione + a halide anion + H(+). Conjugation of reduced glutathione to a wide number of exogenous and endogenous hydrophobic electrophiles. This chain is Microsomal glutathione S-transferase 1 (MGST1), found in Homo sapiens (Human).